We begin with the raw amino-acid sequence, 422 residues long: Cell division protein DivIB (422 aa).

Basic and acidic residues-rich tracts occupy residues 1–23 (MVDW…KQEE) and 62–75 (EEAK…DQEQ). The segment at 1–77 (MVDWDKEAQR…DFAKDQEQKH (77 aa)) is disordered. The Cytoplasmic portion of the chain corresponds to 1-109 (MVDWDKEAQR…LQLKSVSWSR (109 aa)). A helical membrane pass occupies residues 110–130 (LILAAAFLFMIIFSAFWLSPL). Residues 131–202 (NRIATIEVSG…RTVEVNVQEF (72 aa)) enclose the POTRA domain. Topologically, residues 131-422 (NRIATIEVSG…TVTQTRSSNS (292 aa)) are extracellular. Residues 329-422 (NPLNDPFASP…TVTQTRSSNS (94 aa)) are disordered. Basic and acidic residues predominate over residues 338–379 (PEEKASYQEKVDQAKEKSKEKQAKADKHSSESKLGDKPKPRG). A compositionally biased stretch (low complexity) spans 389–422 (TSSQRQTSSQSSPRPGTNSSQQSSTVTQTRSSNS).

Belongs to the FtsQ/DivIB family. DivIB subfamily.

It localises to the cell membrane. Its function is as follows. Cell division protein that may be involved in stabilizing or promoting the assembly of the division complex. The chain is Cell division protein DivIB from Aerococcus urinae (strain CCUG 59500 / ACS-120-V-Col10a).